Here is a 401-residue protein sequence, read N- to C-terminus: Methionine import ATP-binding protein MetN (401 aa).

An ABC transporter domain is found at Ile-6 to Ile-248. Gly-45–Ser-52 is an ATP binding site.

The protein belongs to the ABC transporter superfamily. Methionine importer (TC 3.A.1.24) family. As to quaternary structure, the complex is composed of two ATP-binding proteins (MetN), two transmembrane proteins (MetI) and a solute-binding protein (MetQ).

Its subcellular location is the cell membrane. The catalysed reaction is L-methionine(out) + ATP + H2O = L-methionine(in) + ADP + phosphate + H(+). It carries out the reaction D-methionine(out) + ATP + H2O = D-methionine(in) + ADP + phosphate + H(+). Functionally, part of the ABC transporter complex MetNIQ involved in methionine import. Responsible for energy coupling to the transport system. This Bifidobacterium longum (strain NCC 2705) protein is Methionine import ATP-binding protein MetN.